Here is a 313-residue protein sequence, read N- to C-terminus: Pantothenate synthetase (313 aa).

43 to 50 serves as a coordination point for ATP; that stretch reads MGALHEGH. H50 serves as the catalytic Proton donor. Residue Q75 participates in (R)-pantoate binding. Q75 provides a ligand contact to beta-alanine. 161-164 provides a ligand contact to ATP; the sequence is GEKD. Q167 contributes to the (R)-pantoate binding site. ATP contacts are provided by residues V190 and 198-201; that span reads LSSR.

Belongs to the pantothenate synthetase family. In terms of assembly, homodimer.

The protein resides in the cytoplasm. It carries out the reaction (R)-pantoate + beta-alanine + ATP = (R)-pantothenate + AMP + diphosphate + H(+). It functions in the pathway cofactor biosynthesis; (R)-pantothenate biosynthesis; (R)-pantothenate from (R)-pantoate and beta-alanine: step 1/1. Functionally, catalyzes the condensation of pantoate with beta-alanine in an ATP-dependent reaction via a pantoyl-adenylate intermediate. This is Pantothenate synthetase from Mycobacterium sp. (strain KMS).